The primary structure comprises 265 residues: Undecaprenyl-diphosphatase (265 aa).

The next 8 helical transmembrane spans lie at 1 to 21, 40 to 60, 87 to 107, 113 to 133, 151 to 173, 188 to 208, 214 to 234, and 244 to 264; these read MDWLHVVALAVIQGLTEFLPI, GLAFDVAVHVGSLAAVVLAFH, WAVIVGTLPAVVIGFLLENVI, ASLVIAITTLLFGLLLWWADV, IIGFAQALALIPGTSRSGITITA, SFLLSIPLILAAGSLKGVELI, VAWGTLVAGTLMSFVAAWLCI, and IGMLPFVIYRLILGIVLLVWV.

The protein belongs to the UppP family.

It is found in the cell inner membrane. The catalysed reaction is di-trans,octa-cis-undecaprenyl diphosphate + H2O = di-trans,octa-cis-undecaprenyl phosphate + phosphate + H(+). Catalyzes the dephosphorylation of undecaprenyl diphosphate (UPP). Confers resistance to bacitracin. The chain is Undecaprenyl-diphosphatase from Chromohalobacter salexigens (strain ATCC BAA-138 / DSM 3043 / CIP 106854 / NCIMB 13768 / 1H11).